The sequence spans 149 residues: uncharacterized protein (149 aa).

Residues 34–94 are disordered; sequence HTPCLPKVPR…NPIGSQRIHS (61 aa). The segment covering 56–66 has biased composition (basic and acidic residues); the sequence is QSPHRQGDRRR.

It localises to the mitochondrion. This is an uncharacterized protein from Arabidopsis thaliana (Mouse-ear cress).